Reading from the N-terminus, the 201-residue chain is Large ribosomal subunit protein bL25 (201 aa).

The tract at residues 181 to 201 is disordered; it reads APRESEEEAEEEATETAKESE. Residues 185 to 194 are compositionally biased toward acidic residues; the sequence is SEEEAEEEAT.

Belongs to the bacterial ribosomal protein bL25 family. CTC subfamily. As to quaternary structure, part of the 50S ribosomal subunit; part of the 5S rRNA/L5/L18/L25 subcomplex. Contacts the 5S rRNA. Binds to the 5S rRNA independently of L5 and L18.

Functionally, this is one of the proteins that binds to the 5S RNA in the ribosome where it forms part of the central protuberance. This Thermoanaerobacter pseudethanolicus (strain ATCC 33223 / 39E) (Clostridium thermohydrosulfuricum) protein is Large ribosomal subunit protein bL25.